The following is a 334-amino-acid chain: Ornithine carbamoyltransferase (334 aa).

Residues 57-60, glutamine 84, arginine 108, and 135-138 contribute to the carbamoyl phosphate site; these read STRT and HPTQ. L-ornithine-binding positions include asparagine 169, aspartate 233, and 237–238; that span reads SM. Residues 275 to 276 and arginine 320 contribute to the carbamoyl phosphate site; that span reads CL.

The protein belongs to the aspartate/ornithine carbamoyltransferase superfamily. OTCase family.

The protein localises to the cytoplasm. The catalysed reaction is carbamoyl phosphate + L-ornithine = L-citrulline + phosphate + H(+). Its pathway is amino-acid biosynthesis; L-arginine biosynthesis; L-arginine from L-ornithine and carbamoyl phosphate: step 1/3. Reversibly catalyzes the transfer of the carbamoyl group from carbamoyl phosphate (CP) to the N(epsilon) atom of ornithine (ORN) to produce L-citrulline. In Aeromonas salmonicida (strain A449), this protein is Ornithine carbamoyltransferase.